A 294-amino-acid polypeptide reads, in one-letter code: ATP synthase gamma chain (294 aa).

This sequence belongs to the ATPase gamma chain family. F-type ATPases have 2 components, CF(1) - the catalytic core - and CF(0) - the membrane proton channel. CF(1) has five subunits: alpha(3), beta(3), gamma(1), delta(1), epsilon(1). CF(0) has three main subunits: a, b and c.

It is found in the cell inner membrane. Produces ATP from ADP in the presence of a proton gradient across the membrane. The gamma chain is believed to be important in regulating ATPase activity and the flow of protons through the CF(0) complex. This is ATP synthase gamma chain from Campylobacter jejuni subsp. doylei (strain ATCC BAA-1458 / RM4099 / 269.97).